We begin with the raw amino-acid sequence, 486 residues long: NGFI-A-binding protein 1 (486 aa).

The segment at 4–82 (ALPRTLGELQ…RDWVTNPGLF (79 aa)) is NCD1. Residues Lys-126, Lys-129, and Lys-143 each participate in a glycyl lysine isopeptide (Lys-Gly) (interchain with G-Cter in SUMO2) cross-link. Residues 160–187 (WQGHHATESEHSLSPADLGSPASPKESS) are disordered. 2 positions are modified to phosphoserine: Ser-171 and Ser-182. Lys-211 is covalently cross-linked (Glycyl lysine isopeptide (Lys-Gly) (interchain with G-Cter in SUMO2)). Residues 220–309 (LLKNNKKLAK…ARQVSREVTY (90 aa)) are NCD2. Residues 306 to 337 (EVTYKYTYRTTRLKCGERDELSPKRIKIEDGF) form a necessary for nuclear localization region. Ser-327 carries the phosphoserine modification. Lys-332 is covalently cross-linked (Glycyl lysine isopeptide (Lys-Gly) (interchain with G-Cter in SUMO1); alternate). Residue Lys-332 forms a Glycyl lysine isopeptide (Lys-Gly) (interchain with G-Cter in SUMO2); alternate linkage. Residues Lys-354, Lys-368, and Lys-372 each participate in a glycyl lysine isopeptide (Lys-Gly) (interchain with G-Cter in SUMO2) cross-link. Residues 398–438 (RQSSGEQSPDGGLPSDSSDGQGERPLNLRIPSVQNRQPHHF) form a disordered region. The span at 404–417 (QSPDGGLPSDSSDG) shows a compositional bias: low complexity. The residue at position 405 (Ser-405) is a Phosphoserine. Residues Lys-453, Lys-464, and Lys-476 each participate in a glycyl lysine isopeptide (Lys-Gly) (interchain with G-Cter in SUMO2) cross-link. A Glycyl lysine isopeptide (Lys-Gly) (interchain with G-Cter in SUMO1); alternate cross-link involves residue Lys-479. Lys-479 participates in a covalent cross-link: Glycyl lysine isopeptide (Lys-Gly) (interchain with G-Cter in SUMO2); alternate.

This sequence belongs to the NAB family. Homomultimers may associate with EGR1 bound to DNA. As to expression, widely expressed in adult. In day 16 embryo highest levels in forebrain, thymus, salivary gland and cartilage.

It is found in the nucleus. Acts as a transcriptional repressor for zinc finger transcription factors EGR1 and EGR2. This is NGFI-A-binding protein 1 (Nab1) from Mus musculus (Mouse).